Consider the following 153-residue polypeptide: Small ribosomal subunit protein uS15 (153 aa).

This sequence belongs to the universal ribosomal protein uS15 family. Part of the 30S ribosomal subunit.

The chain is Small ribosomal subunit protein uS15 from Sulfolobus acidocaldarius (strain ATCC 33909 / DSM 639 / JCM 8929 / NBRC 15157 / NCIMB 11770).